The primary structure comprises 356 residues: Leucine-rich repeat and transmembrane domain-containing protein 1 (356 aa).

Residues 1 to 32 (MLNEGLCCGAWAMKGTLLLVSSVGLLLPGVGS) form the signal peptide. The LRRNT domain maps to 33–62 (CPMKCLCHPSSNSVDCSGQGLSKVPRDLPP). Over 33–299 (CPMKCLCHPS…PTNLRHAVAT (267 aa)) the chain is Extracellular. LRR repeat units lie at residues 63-84 (WTVT…AFQS), 87-108 (LLST…AFYG), 111-132 (HLRV…FAHA), 135-156 (GLRE…LGKP), and 159-180 (NLTV…LLEA). Residues N92 and N116 are each glycosylated (N-linked (GlcNAc...) asparagine). An N-linked (GlcNAc...) asparagine glycan is attached at N159. One can recognise an LRRCT domain in the interval 192–246 (NPWICDCHLLGLKLWLERFTFQGGETDGAICRLPEPWQGKALLSIPHELYQPCSL). Positions 255–277 (LVQQPGSAPQDAQKSHENSSGQQ) are enriched in polar residues. The disordered stretch occupies residues 255–288 (LVQQPGSAPQDAQKSHENSSGQQDPLECEAKPKP). Residues 300–320 (VVITGVVCGIVCLMMLAAAIY) traverse the membrane as a helical segment. The Cytoplasmic portion of the chain corresponds to 321–356 (GCTYAAITAQYQGRPLASARKSEKMGSKELMDSSSA).

The protein resides in the membrane. This is Leucine-rich repeat and transmembrane domain-containing protein 1 (Lrtm1) from Mus musculus (Mouse).